A 634-amino-acid chain; its full sequence is Phosphatase and actin regulator 2 (634 aa).

4 disordered regions span residues 1–32 (MDNA…KRKG), 84–344 (LPDQ…PLED), 412–471 (PQLL…ALAS), and 485–508 (NRPS…ERQE). A lipid anchor (N-myristoyl glycine) is attached at D2. A compositionally biased stretch (polar residues) spans 13-26 (IANSDGPTAGSQTP). Phosphoserine is present on S16. Position 25 is a phosphothreonine (T25). An RPEL 1 repeat occupies 60 to 85 (AVLERKISTRQSREELIRRGVLKELP). Basic and acidic residues-rich tracts occupy residues 108–120 (ESTR…KSEE) and 137–147 (EDKKENTENHS). Over residues 153-162 (PALPPSAPPK) the composition is skewed to pro residues. 2 stretches are compositionally biased toward low complexity: residues 231 to 247 (GSKA…SSRP) and 276 to 290 (TSHL…GTSD). A compositionally biased stretch (basic and acidic residues) spans 291-304 (LKGEPAETRVESFK). Pro residues predominate over residues 324–341 (VPPPPVAPAPSPLAPPLP). Phosphoserine is present on S423. The span at 452-464 (TDDEDEDEDEDGS) shows a compositional bias: acidic residues. RPEL repeat units lie at residues 477–502 (DTLA…QRTS), 515–540 (TKLV…KQKN), and 553–578 (RRLS…RFNE). Residues 488–508 (SKKELEDKNILQRTSEEERQE) are compositionally biased toward basic and acidic residues. A phosphoserine mark is found at S522 and S560.

The protein belongs to the phosphatase and actin regulator family. Binds PPP1CA and actin.

The protein localises to the membrane. The polypeptide is Phosphatase and actin regulator 2 (PHACTR2) (Homo sapiens (Human)).